A 65-amino-acid polypeptide reads, in one-letter code: Large ribosomal subunit protein bL35 (65 aa).

Belongs to the bacterial ribosomal protein bL35 family.

The sequence is that of Large ribosomal subunit protein bL35 from Buchnera aphidicola subsp. Cinara cedri (strain Cc).